The following is a 196-amino-acid chain: Dephospho-CoA kinase (196 aa).

The region spanning 5–196 (IIGLTGGIAT…QVDIALNFEL (192 aa)) is the DPCK domain. 13–18 (ATGKTT) provides a ligand contact to ATP.

It belongs to the CoaE family.

Its subcellular location is the cytoplasm. The catalysed reaction is 3'-dephospho-CoA + ATP = ADP + CoA + H(+). Its pathway is cofactor biosynthesis; coenzyme A biosynthesis; CoA from (R)-pantothenate: step 5/5. Its function is as follows. Catalyzes the phosphorylation of the 3'-hydroxyl group of dephosphocoenzyme A to form coenzyme A. The sequence is that of Dephospho-CoA kinase from Trichormus variabilis (strain ATCC 29413 / PCC 7937) (Anabaena variabilis).